The chain runs to 616 residues: Chaperone protein HscA (616 aa).

Belongs to the heat shock protein 70 family.

Its function is as follows. Chaperone involved in the maturation of iron-sulfur cluster-containing proteins. Has a low intrinsic ATPase activity which is markedly stimulated by HscB. Involved in the maturation of IscU. In Cronobacter sakazakii (strain ATCC BAA-894) (Enterobacter sakazakii), this protein is Chaperone protein HscA.